We begin with the raw amino-acid sequence, 934 residues long: Serine/threonine-protein kinase PknD (934 aa).

Positions 4–296 (YELIRLIGKG…ELRQALQPYL (293 aa)) constitute a Protein kinase domain. Residues 10-18 (IGKGGMGEV) and lysine 33 contribute to the ATP site. Aspartate 138 functions as the Proton acceptor in the catalytic mechanism.

Belongs to the protein kinase superfamily. Ser/Thr protein kinase family. As to quaternary structure, interacts with Pkn1. Autophosphorylated on serine and threonine residues.

It carries out the reaction L-seryl-[protein] + ATP = O-phospho-L-seryl-[protein] + ADP + H(+). The enzyme catalyses L-threonyl-[protein] + ATP = O-phospho-L-threonyl-[protein] + ADP + H(+). Its function is as follows. Together with the serine/threonine kinase Pkn1, may play a role in the specific interactions with host proteins during intracellular growth. Autophosphorylates and also phosphorylates Pkn1. The chain is Serine/threonine-protein kinase PknD from Chlamydia trachomatis serovar D (strain ATCC VR-885 / DSM 19411 / UW-3/Cx).